Here is a 207-residue protein sequence, read N- to C-terminus: High frequency lysogenization protein HflD homolog (207 aa).

This sequence belongs to the HflD family.

The protein localises to the cytoplasm. It localises to the cell inner membrane. The chain is High frequency lysogenization protein HflD homolog from Tolumonas auensis (strain DSM 9187 / NBRC 110442 / TA 4).